A 147-amino-acid chain; its full sequence is Mitochondrial import receptor subunit TOM20 homolog (147 aa).

Residues 1–3 (MVA) lie on the Mitochondrial intermembrane side of the membrane. Residues 4–26 (VGKTSAIAAGVCGALLLGYCIYF) form a helical membrane-spanning segment. Topologically, residues 27–147 (DRKRRSDPNF…AQNLSEDDVE (121 aa)) are cytoplasmic.

Belongs to the Tom20 family. As to quaternary structure, forms part of the preprotein translocase complex of the outer mitochondrial membrane (TOM complex). Interacts with tom22.

The protein resides in the mitochondrion outer membrane. In terms of biological role, central component of the receptor complex responsible for the recognition and translocation of cytosolically synthesized mitochondrial preproteins. Together with tom22 functions as the transit peptide receptor at the surface of the mitochondrion outer membrane and facilitates the movement of preproteins into the tom40 translocation pore. The chain is Mitochondrial import receptor subunit TOM20 homolog (tomm20) from Xenopus laevis (African clawed frog).